The following is a 404-amino-acid chain: MQQVKKVVLAYSGGVDTSVCIPYLKKEYGISEVITFVADLGQGEDLELIRQKALNSGASQSIVGNLVNSFVERYAFPAIRANALYLDKYPLSTALARPLIAENLVNIAREFSADAVAHGCTGKGNDQVRFDLAINALGPDLKIITPAREWNMSREEAIIYGEKFGIPAPVSKKSPYSIDVNLLGRSIEAGILEDPMQEAPEDIFAMTSSIDNSPDSPLDIEIIFKNGFPVGINDEFLTPVEIIKKANVLAGEHGYGRIDMIEDRVVGIKSREIYETPGLLLLIKAHKELESITLNPDIVDFKGIVEKKWGQIVYQGFWFGPLKDSLDAFISSTQTSVNGRVKIRLYKGNAIVIGRMSENNSLYRDDLATYSKDDVFKHSLAEGFIYMWGMSNKIWAELNSKTTD.

Residues 10–18 (AYSGGVDTS) and A38 contribute to the ATP site. Y89 is a binding site for L-citrulline. An ATP-binding site is contributed by G119. L-aspartate-binding residues include T121, N125, and D126. N125 is a binding site for L-citrulline. L-citrulline is bound by residues R129, S177, S186, E262, and Y274.

The protein belongs to the argininosuccinate synthase family. Type 1 subfamily. In terms of assembly, homotetramer.

The protein localises to the cytoplasm. It catalyses the reaction L-citrulline + L-aspartate + ATP = 2-(N(omega)-L-arginino)succinate + AMP + diphosphate + H(+). Its pathway is amino-acid biosynthesis; L-arginine biosynthesis; L-arginine from L-ornithine and carbamoyl phosphate: step 2/3. This Prochlorococcus marinus (strain MIT 9215) protein is Argininosuccinate synthase.